The chain runs to 578 residues: Proline--tRNA ligase (578 aa).

The protein belongs to the class-II aminoacyl-tRNA synthetase family. ProS type 1 subfamily. As to quaternary structure, homodimer.

It localises to the cytoplasm. It catalyses the reaction tRNA(Pro) + L-proline + ATP = L-prolyl-tRNA(Pro) + AMP + diphosphate. Its function is as follows. Catalyzes the attachment of proline to tRNA(Pro) in a two-step reaction: proline is first activated by ATP to form Pro-AMP and then transferred to the acceptor end of tRNA(Pro). As ProRS can inadvertently accommodate and process non-cognate amino acids such as alanine and cysteine, to avoid such errors it has two additional distinct editing activities against alanine. One activity is designated as 'pretransfer' editing and involves the tRNA(Pro)-independent hydrolysis of activated Ala-AMP. The other activity is designated 'posttransfer' editing and involves deacylation of mischarged Ala-tRNA(Pro). The misacylated Cys-tRNA(Pro) is not edited by ProRS. The sequence is that of Proline--tRNA ligase from Paraburkholderia xenovorans (strain LB400).